The chain runs to 32 residues: Acetolactate synthase, catabolic (32 aa).

Belongs to the TPP enzyme family. In terms of assembly, homodimer.

It carries out the reaction 2 pyruvate + H(+) = (2S)-2-acetolactate + CO2. The protein operates within polyol metabolism; (R,R)-butane-2,3-diol biosynthesis; (R,R)-butane-2,3-diol from pyruvate: step 1/3. The polypeptide is Acetolactate synthase, catabolic (budB) (Klebsiella aerogenes (Enterobacter aerogenes)).